Reading from the N-terminus, the 255-residue chain is Small ribosomal subunit protein eS1 (255 aa).

N-acetylalanine; partial is present on alanine 2.

This sequence belongs to the eukaryotic ribosomal protein eS1 family. Component of the small ribosomal subunit. Mature ribosomes consist of a small (40S) and a large (60S) subunit. The 40S subunit contains about 33 different proteins and 1 molecule of RNA (18S). The 60S subunit contains about 49 different proteins and 3 molecules of RNA (25S, 5.8S and 5S).

The protein resides in the cytoplasm. This Pyrenophora tritici-repentis (strain Pt-1C-BFP) (Wheat tan spot fungus) protein is Small ribosomal subunit protein eS1 (rps1).